The following is a 159-amino-acid chain: Cytochrome c-type biogenesis CcmH-like mitochondrial protein (159 aa).

The Mitochondrial intermembrane segment spans residues 1–82 (MEKTDEERKK…ETVLYAPKFD (82 aa)). Residues Cys27 and Cys30 each contribute to the heme site. A helical membrane pass occupies residues 83 to 105 (LQTAALWLTPVIIAGGTAAGIVY). The Mitochondrial matrix portion of the chain corresponds to 106-159 (QKHRLRKNVDIMALNLIRGVPLTPKERVTILDVLIPPSPPPQGVVSRLRRWLNR).

The protein belongs to the CcmH/CycL/Ccl2/NrfF family. As to quaternary structure, interacts (via N-terminus) with CYTC-1. Interacts with CCMFN1 and CCMFN2.

It is found in the mitochondrion inner membrane. Plays a central role in mitochondrial cytochrome c maturation. Probable component of a heme lyase complex involved in the reduction of apocytochrome c. Forms a complex with CCMF proteins (CCMFC, CCMFN1 and CCMFN2) that performs the assembly of heme with c-type apocytochromes in mitochondria. The chain is Cytochrome c-type biogenesis CcmH-like mitochondrial protein from Arabidopsis thaliana (Mouse-ear cress).